Consider the following 203-residue polypeptide: Suppressor/enhancer of lin-12 protein 9 (203 aa).

A signal peptide spans 1–18; it reads MNSLTWILAVLFVTPAAS. Residues 19-170 lie on the Lumenal side of the membrane; the sequence is YFIHVDANEE…RNINENTNSR (152 aa). In terms of domain architecture, GOLD spans 28–110; the sequence is EQCFFDRLTS…PKAVMFTVEI (83 aa). The chain crosses the membrane as a helical span at residues 171 to 191; sequence VVMWAAFEAFVLVGMTVGQIF. Residues 192-203 are Cytoplasmic-facing; sequence YLKRFFEVRTMV.

This sequence belongs to the EMP24/GP25L family.

The protein resides in the cytoplasmic vesicle membrane. The protein localises to the cytoplasmic vesicle. It localises to the COPI-coated vesicle membrane. Its subcellular location is the golgi apparatus membrane. In terms of biological role, may have a role in the negative regulation of lin-12 and glp-1 transport to the cell surface. May also have a role in a quality control mechanism for endoplasmic reticulum-Golgi transport; the budding of coatomer-coated and other species of coated vesicles, could bind cargo molecules to collect them into budding vesicles. Involved in regulating the expression of proteasomal subunits such as rpt-3 in order to confer resistance to proteasomal dysfunction. The chain is Suppressor/enhancer of lin-12 protein 9 (sel-9) from Caenorhabditis elegans.